The chain runs to 213 residues: Methylthioribulose-1-phosphate dehydratase (213 aa).

Residues H97 and H99 each coordinate Zn(2+).

The protein belongs to the aldolase class II family. MtnB subfamily. In terms of assembly, homotetramer. The cofactor is Zn(2+).

The catalysed reaction is 5-(methylsulfanyl)-D-ribulose 1-phosphate = 5-methylsulfanyl-2,3-dioxopentyl phosphate + H2O. Its pathway is amino-acid biosynthesis; L-methionine biosynthesis via salvage pathway; L-methionine from S-methyl-5-thio-alpha-D-ribose 1-phosphate: step 2/6. Its function is as follows. Catalyzes the dehydration of methylthioribulose-1-phosphate (MTRu-1-P) into 2,3-diketo-5-methylthiopentyl-1-phosphate (DK-MTP-1-P). The protein is Methylthioribulose-1-phosphate dehydratase of Geobacillus sp. (strain WCH70).